Consider the following 601-residue polypeptide: Glutathione-regulated potassium-efflux system protein KefB (601 aa).

A run of 13 helical transmembrane segments spans residues 4–24, 29–49, 55–75, 87–107, 111–131, 152–172, 177–197, 207–227, 230–250, 262–282, 284–304, 324–344, and 356–376; these read ADLL…VPLA, IGAV…GLGF, EILH…GLEL, IFGV…GLLM, FLWQ…TAMA, VLLF…LLAG, HFDW…LIGG, FIAA…LVLS, LFMD…GVLL, AIDP…GMSL, LGVL…LVVI, MQFA…FSTA, and ALLL…MKGI. One can recognise an RCK N-terminal domain in the interval 400-519; sequence KPQVIVVGFG…AGVTQFSRET (120 aa).

This sequence belongs to the monovalent cation:proton antiporter 2 (CPA2) transporter (TC 2.A.37) family. KefB subfamily. Interacts with the regulatory subunit KefG.

The protein localises to the cell inner membrane. Pore-forming subunit of a potassium efflux system that confers protection against electrophiles. Catalyzes K(+)/H(+) antiport. The chain is Glutathione-regulated potassium-efflux system protein KefB from Salmonella heidelberg (strain SL476).